The following is a 344-amino-acid chain: GTP 3',8-cyclase (344 aa).

One can recognise a Radical SAM core domain in the interval 19 to 244 (PFARPITYLR…TPLAERTGGP (226 aa)). Residue Arg28 coordinates GTP. Cys35 and Cys39 together coordinate [4Fe-4S] cluster. Tyr41 serves as a coordination point for S-adenosyl-L-methionine. Residue Cys42 coordinates [4Fe-4S] cluster. Arg77 serves as a coordination point for GTP. Gly81 is an S-adenosyl-L-methionine binding site. Thr110 provides a ligand contact to GTP. S-adenosyl-L-methionine is bound at residue Ser134. Lys170 contributes to the GTP binding site. Met204 provides a ligand contact to S-adenosyl-L-methionine. Residues Cys268 and Cys271 each coordinate [4Fe-4S] cluster. 273–275 (RVR) contributes to the GTP binding site. Residue Cys285 participates in [4Fe-4S] cluster binding.

Belongs to the radical SAM superfamily. MoaA family. Monomer and homodimer. [4Fe-4S] cluster serves as cofactor.

It carries out the reaction GTP + AH2 + S-adenosyl-L-methionine = (8S)-3',8-cyclo-7,8-dihydroguanosine 5'-triphosphate + 5'-deoxyadenosine + L-methionine + A + H(+). It participates in cofactor biosynthesis; molybdopterin biosynthesis. Its function is as follows. Catalyzes the cyclization of GTP to (8S)-3',8-cyclo-7,8-dihydroguanosine 5'-triphosphate. The protein is GTP 3',8-cyclase of Paracoccus denitrificans (strain Pd 1222).